The sequence spans 290 residues: Agmatinase (290 aa).

The Mn(2+) site is built by His-112, Asp-135, His-137, Asp-139, Asp-216, and Asp-218.

Belongs to the arginase family. Agmatinase subfamily. Mn(2+) is required as a cofactor.

It carries out the reaction agmatine + H2O = urea + putrescine. Its pathway is amine and polyamine biosynthesis; putrescine biosynthesis via agmatine pathway; putrescine from agmatine: step 1/1. In terms of biological role, catalyzes the formation of putrescine from agmatine. In Bacillus subtilis (strain 168), this protein is Agmatinase (speB).